The chain runs to 370 residues: High affinity iron permease ftrA (370 aa).

7 consecutive transmembrane segments (helical) span residues 5–25 (VFAVPIFFICFRECVETSIIV), 52–72 (VWWGVAIGLFISVCIGAGMIG), 88–108 (LWEGIFSLIASVIITIMGAAL), 148–168 (AMFLLPFITVLREGLEAVVFI), 179–199 (AFPLPVFTGILAGVAIGYLLY), 206–226 (SLQIFLIISTCILYLVAAGLF), and 293–313 (YGSVLSYNLYWIAVIVWFVAM). The segment at 335 to 370 (RKSAEPGNGEQDVEVSTIPSDLQTESKIPKSGASLV) is disordered. Residues 351 to 360 (TIPSDLQTES) show a composition bias toward polar residues.

The protein belongs to the oxidase-dependent Fe transporter (OFeT) (TC 9.A.10.1) family.

The protein localises to the cell membrane. In terms of biological role, high affinity iron permease; part of the reductive iron assimilatory system (RIA), a siderophore-independent high affinity iron uptake mechanism. The protein is High affinity iron permease ftrA of Aspergillus fumigatus (strain ATCC MYA-4609 / CBS 101355 / FGSC A1100 / Af293) (Neosartorya fumigata).